We begin with the raw amino-acid sequence, 769 residues long: Calcium up-regulated protein F (769 aa).

The segment at 1-21 (MINIKDISKSSNQSEEKSLKG) is disordered. Ricin B-type lectin domains follow at residues 25 to 145 (KTKY…WTTF) and 116 to 249 (QGNG…WGIN).

This sequence belongs to the cup family.

The protein resides in the cytoplasm. The protein localises to the membrane. May play an important role in stabilizing and/or regulating the cell membrane during Ca(2+) stress or certain stages of development. The sequence is that of Calcium up-regulated protein F (cupF) from Dictyostelium discoideum (Social amoeba).